Here is a 105-residue protein sequence, read N- to C-terminus: uncharacterized protein (105 aa).

The protein localises to the cytoplasm. Its subcellular location is the nucleus. This is an uncharacterized protein from Schizosaccharomyces pombe (strain 972 / ATCC 24843) (Fission yeast).